Consider the following 712-residue polypeptide: UvrABC system protein B (712 aa).

The Helicase ATP-binding domain occupies 35–421 (RRVQAGEKDV…SDGAVEQIIR (387 aa)). Position 48 to 55 (48 to 55 (GATGTGKS)) interacts with ATP. Positions 101–124 (YYDYYQPEAYVPQSDTYIEKDSSI) match the Beta-hairpin motif. The region spanning 438-604 (QIDDLVHEIR…PLRKKINDIV (167 aa)) is the Helicase C-terminal domain. Residues 625–655 (TKEGKGAKAPVPALGGQKTGGAKAARGRAKE) are disordered. One can recognise a UVR domain in the interval 667–702 (AEQIEDLTTRMRAAAADLQFEIAARLRDEVSEMKKE).

Belongs to the UvrB family. In terms of assembly, forms a heterotetramer with UvrA during the search for lesions. Interacts with UvrC in an incision complex.

The protein resides in the cytoplasm. The UvrABC repair system catalyzes the recognition and processing of DNA lesions. A damage recognition complex composed of 2 UvrA and 2 UvrB subunits scans DNA for abnormalities. Upon binding of the UvrA(2)B(2) complex to a putative damaged site, the DNA wraps around one UvrB monomer. DNA wrap is dependent on ATP binding by UvrB and probably causes local melting of the DNA helix, facilitating insertion of UvrB beta-hairpin between the DNA strands. Then UvrB probes one DNA strand for the presence of a lesion. If a lesion is found the UvrA subunits dissociate and the UvrB-DNA preincision complex is formed. This complex is subsequently bound by UvrC and the second UvrB is released. If no lesion is found, the DNA wraps around the other UvrB subunit that will check the other stand for damage. This Streptomyces coelicolor (strain ATCC BAA-471 / A3(2) / M145) protein is UvrABC system protein B.